A 66-amino-acid polypeptide reads, in one-letter code: Large ribosomal subunit protein uL29 (66 aa).

This sequence belongs to the universal ribosomal protein uL29 family.

The polypeptide is Large ribosomal subunit protein uL29 (Borrelia recurrentis (strain A1)).